Consider the following 426-residue polypeptide: Zinc finger CCCH domain-containing protein 15 (426 aa).

The segment covering 1-12 has biased composition (low complexity); it reads MPPKKQAQAGGS. Disordered regions lie at residues 1-30 and 53-74; these read MPPK…KTFG and GQQN…KDDK. Residues 13–29 are compositionally biased toward basic and acidic residues; it reads KKAEQKKKEKIIEDKTF. The span at 53–62 shows a compositional bias: polar residues; the sequence is GQQNPRQVAQ. The stretch at 61–86 forms a coiled coil; that stretch reads AQSEAEKKLKKDDKKKELQELNELFK. Over residues 64-74 the composition is skewed to basic and acidic residues; the sequence is EAEKKLKKDDK. C3H1-type zinc fingers lie at residues 99–126 and 174–212; these read DPKS…HDLT and PKTQ…HALP. Residues 218–285 are a coiled coil; it reads KKDKKKEEKE…RRKADFKAGK (68 aa). Serine 231 is modified (phosphoserine). Positions 236 to 260 are required for interaction with DRG1; sequence IERERSALGPNVTKITLESFLAWKK. A disordered region spans residues 299-326; it reads PELVNDDDEEADDTRYTQGTGGDEVDDS. Residues serine 351, serine 360, and serine 381 each carry the phosphoserine modification. The segment at 358–411 is disordered; the sequence is YTSDKDENKLSEASGGRAENGERSDLEEDNEREGTENGAIDAVPVDENLFTGED.

The protein belongs to the ZC3H15/TMA46 family. As to quaternary structure, interacts with DRG1; this interaction prevents DRG1 poly-ubiquitination and degradation by proteasome. DRG1-ZC3H15/DFRP1 complex co-sediments with polysomes. Associates with microtubules.

It localises to the cytoplasm. The protein resides in the nucleus. Protects DRG1 from proteolytic degradation. Stimulates DRG1 GTPase activity likely by increasing the affinity for the potassium ions. This chain is Zinc finger CCCH domain-containing protein 15 (ZC3H15), found in Homo sapiens (Human).